The chain runs to 84 residues: Large ribosomal subunit protein uL23 (84 aa).

This sequence belongs to the universal ribosomal protein uL23 family. Part of the 50S ribosomal subunit. Contacts protein L29.

Its function is as follows. Binds to 23S rRNA. One of the proteins that surrounds the polypeptide exit tunnel on the outside of the ribosome. The chain is Large ribosomal subunit protein uL23 from Haloquadratum walsbyi (strain DSM 16790 / HBSQ001).